We begin with the raw amino-acid sequence, 71 residues long: MATKKTFEERLQELETIVSKLESGEVPLEEAIAEFQKGMILSKDLQKTLQNAEKTLVKVMQADGSEIEIED.

The protein belongs to the XseB family. In terms of assembly, heterooligomer composed of large and small subunits.

Its subcellular location is the cytoplasm. The enzyme catalyses Exonucleolytic cleavage in either 5'- to 3'- or 3'- to 5'-direction to yield nucleoside 5'-phosphates.. In terms of biological role, bidirectionally degrades single-stranded DNA into large acid-insoluble oligonucleotides, which are then degraded further into small acid-soluble oligonucleotides. This chain is Exodeoxyribonuclease 7 small subunit, found in Streptococcus uberis (strain ATCC BAA-854 / 0140J).